Consider the following 119-residue polypeptide: Large ribosomal subunit protein uL24 (119 aa).

The protein belongs to the universal ribosomal protein uL24 family. Part of the 50S ribosomal subunit.

In terms of biological role, one of two assembly initiator proteins, it binds directly to the 5'-end of the 23S rRNA, where it nucleates assembly of the 50S subunit. One of the proteins that surrounds the polypeptide exit tunnel on the outside of the subunit. This chain is Large ribosomal subunit protein uL24, found in Paenarthrobacter aurescens (strain TC1).